We begin with the raw amino-acid sequence, 431 residues long: Putative F-box/FBD/LRR-repeat protein At3g56780 (431 aa).

The F-box domain occupies 6 to 62; that stretch reads CSCINELPDDLILKILSFVSTKHVVVTSLLSKKWKSLWTRVPILKYDVRDHTRFERF. LRR repeat units follow at residues 56–82, 88–113, 135–161, 162–187, 209–236, 237–262, 264–285, and 357–382; these read HTRFERFLDKSLFSHQSHVLESLHVEL, NKDIGPWIRTALHHHHCHLRELEIDA, LKGIVIDVEAPLTTVSLPSLKTLHIDH, SSLFDFGSLQMLLSNCNFITDLMVIR, LEGLKDVISISSSSAVCLPLLKTLHVAR, MEDFNNDSFCRLLSNCPVLSDLTLEE, TSDVLLNLDIDMPYLQRLSIIT, and CSERSVEMLVDLLLCFTKLVVLKLEH. Positions 391–423 constitute an FBD domain; that stretch reads RWEPPSLVPECLLSSLEALEWKGYTGRYGDKDL.

This chain is Putative F-box/FBD/LRR-repeat protein At3g56780, found in Arabidopsis thaliana (Mouse-ear cress).